We begin with the raw amino-acid sequence, 151 residues long: 3-dehydroquinate dehydratase (151 aa).

The Proton acceptor role is filled by tyrosine 26. 3 residues coordinate substrate: asparagine 75, histidine 81, and aspartate 88. Histidine 101 acts as the Proton donor in catalysis. Substrate is bound by residues 102 to 103 (LS) and arginine 112.

The protein belongs to the type-II 3-dehydroquinase family. In terms of assembly, homododecamer.

It catalyses the reaction 3-dehydroquinate = 3-dehydroshikimate + H2O. Its pathway is metabolic intermediate biosynthesis; chorismate biosynthesis; chorismate from D-erythrose 4-phosphate and phosphoenolpyruvate: step 3/7. Functionally, catalyzes a trans-dehydration via an enolate intermediate. This Shewanella sediminis (strain HAW-EB3) protein is 3-dehydroquinate dehydratase.